The chain runs to 107 residues: Protein Asterix (107 aa).

Polar residues predominate over residues 1-15 (MSHSHGNASSVNDPR). The disordered stretch occupies residues 1-25 (MSHSHGNASSVNDPRQPSAAKPYIP). Residues 82 to 98 (ISMAMMFAIMGLVTNYL) traverse the membrane as a helical segment.

The protein belongs to the Asterix family.

The protein localises to the membrane. This Arabidopsis thaliana (Mouse-ear cress) protein is Protein Asterix.